We begin with the raw amino-acid sequence, 403 residues long: Tyrosine--tRNA ligase (403 aa).

A 'HIGH' region motif is present at residues 42 to 51; the sequence is PTAPDLHLGH. A 'KMSKS' region motif is present at residues 226-230; that stretch reads KMSKS. Lys229 serves as a coordination point for ATP. The region spanning 339-400 is the S4 RNA-binding domain; that stretch reads LRIASLLTAA…GKRNFARVAL (62 aa).

This sequence belongs to the class-I aminoacyl-tRNA synthetase family. TyrS type 2 subfamily. Homodimer.

The protein localises to the cytoplasm. The enzyme catalyses tRNA(Tyr) + L-tyrosine + ATP = L-tyrosyl-tRNA(Tyr) + AMP + diphosphate + H(+). Catalyzes the attachment of tyrosine to tRNA(Tyr) in a two-step reaction: tyrosine is first activated by ATP to form Tyr-AMP and then transferred to the acceptor end of tRNA(Tyr). The polypeptide is Tyrosine--tRNA ligase (Xanthomonas campestris pv. campestris (strain ATCC 33913 / DSM 3586 / NCPPB 528 / LMG 568 / P 25)).